The following is a 238-amino-acid chain: Ribonuclease 3 (238 aa).

Residues 11–136 form the RNase III domain; the sequence is RARLEAAIGY…LIAAIYLDGG (126 aa). E49 provides a ligand contact to Mg(2+). Residue D53 is part of the active site. Positions 122 and 125 each coordinate Mg(2+). Residue E125 is part of the active site. The DRBM domain occupies 161 to 230; the sequence is DAKTELQEWA…AMKLLEREGV (70 aa).

It belongs to the ribonuclease III family. Homodimer. The cofactor is Mg(2+).

It localises to the cytoplasm. It catalyses the reaction Endonucleolytic cleavage to 5'-phosphomonoester.. Digests double-stranded RNA. Involved in the processing of primary rRNA transcript to yield the immediate precursors to the large and small rRNAs (23S and 16S). Processes some mRNAs, and tRNAs when they are encoded in the rRNA operon. Processes pre-crRNA and tracrRNA of type II CRISPR loci if present in the organism. The polypeptide is Ribonuclease 3 (Rhizobium meliloti (strain 1021) (Ensifer meliloti)).